An 872-amino-acid chain; its full sequence is G-type lectin S-receptor-like serine/threonine-protein kinase At5g35370 (872 aa).

A signal peptide spans 1-26 (MKSTFLLLLLLLSLNLLFVFVSCASS). Topologically, residues 27 to 443 (IEFVYPNFTA…NNNRGGSSFP (417 aa)) are extracellular. 3 N-linked (GlcNAc...) asparagine glycosylation sites follow: N33, N148, and N239. The 122-residue stretch at 35–156 (TASNLRFVDS…LNVSLWESFD (122 aa)) folds into the Bulb-type lectin domain. One can recognise an EGF-like; atypical domain in the interval 283-322 (PMDSCQIPFVCGKLGLCNLDNASENQSCSCPDEMRMDAGK). Cystine bridges form between C287–C299 and C293–C310. N-linked (GlcNAc...) asparagine glycosylation is found at N303, N307, N342, N379, and N389. The PAN domain maps to 338-423 (CEARNISYLE…HDLIGYVKLS (86 aa)). Cystine bridges form between C372–C394 and C376–C382. Residues 444–464 (VIALVLLPCSGFFLLIALGLL) form a helical membrane-spanning segment. Topologically, residues 465–872 (WWRRCAVMRY…IASQEVSGPR (408 aa)) are cytoplasmic. The Protein kinase domain occupies 515–814 (ENFKMQIGSG…GSIPLGNPRM (300 aa)). ATP is bound by residues 521-529 (IGSGGFGSV) and K543. A caM-binding region spans residues 603–620 (GNGPVLEWQERFDIALGT). Catalysis depends on D639, which acts as the Proton acceptor. Position 656 is a phosphoserine (S656). T673 carries the phosphothreonine modification. Phosphoserine is present on residues S716 and S859. The interval 836-872 (QNGESETMVFHRRESSNSGGSRQSASYIASQEVSGPR) is disordered. A compositionally biased stretch (low complexity) spans 851–861 (SNSGGSRQSAS). Over residues 862–872 (YIASQEVSGPR) the composition is skewed to polar residues.

This sequence belongs to the protein kinase superfamily. Ser/Thr protein kinase family.

Its subcellular location is the cell membrane. It catalyses the reaction L-seryl-[protein] + ATP = O-phospho-L-seryl-[protein] + ADP + H(+). The enzyme catalyses L-threonyl-[protein] + ATP = O-phospho-L-threonyl-[protein] + ADP + H(+). This is G-type lectin S-receptor-like serine/threonine-protein kinase At5g35370 from Arabidopsis thaliana (Mouse-ear cress).